Reading from the N-terminus, the 220-residue chain is Ribosomal RNA large subunit methyltransferase E (220 aa).

S-adenosyl-L-methionine-binding residues include Gly-60, Trp-62, Asp-92, Asp-108, and Asp-133. Lys-173 serves as the catalytic Proton acceptor.

Belongs to the class I-like SAM-binding methyltransferase superfamily. RNA methyltransferase RlmE family.

It is found in the cytoplasm. The enzyme catalyses uridine(2552) in 23S rRNA + S-adenosyl-L-methionine = 2'-O-methyluridine(2552) in 23S rRNA + S-adenosyl-L-homocysteine + H(+). Specifically methylates the uridine in position 2552 of 23S rRNA at the 2'-O position of the ribose in the fully assembled 50S ribosomal subunit. This chain is Ribosomal RNA large subunit methyltransferase E, found in Burkholderia thailandensis (strain ATCC 700388 / DSM 13276 / CCUG 48851 / CIP 106301 / E264).